Here is a 478-residue protein sequence, read N- to C-terminus: Calcium/calmodulin-dependent protein kinase type II subunit alpha (478 aa).

A Phosphotyrosine modification is found at tyrosine 13. The Protein kinase domain maps to 13–271; the sequence is YQLFEELGKG…AAEALKHPWI (259 aa). ATP contacts are provided by residues 19 to 27 and lysine 42; that span reads LGKGAFSVV. The active-site Proton acceptor is the aspartate 135. Serine 257 is subject to Phosphoserine. Threonine 286 is modified (phosphothreonine; by autocatalysis). Residues 290-300 are calmodulin-binding; that stretch reads LKKFNARRKLK. Residues 310 to 320 are interaction with BAALC; sequence TRNFSGGKSGG. The disordered stretch occupies residues 314-341; sequence SGGKSGGNKKNDGVKESSESTNTTIEDE. Basic and acidic residues predominate over residues 322 to 331; sequence KKNDGVKESS. A phosphoserine mark is found at serine 330, serine 331, and serine 333. Residues threonine 336 and threonine 337 each carry the phosphothreonine modification. Position 404 is a phosphoserine (serine 404).

The protein belongs to the protein kinase superfamily. CAMK Ser/Thr protein kinase family. CaMK subfamily. As to quaternary structure, there are 4 genes encoding calcium/calmodulin-dependent protein kinase type II chains: CAMK2A, CAMK2B, CAMK2G and CAMK2D. The corresponding proteins assemble into homo- or heteromultimeric holoenzymes composed of 12 subunits with two hexameric rings stacked one on top of the other. Interacts with BAALC. Interacts with MPDZ. Interacts with SYN1. Interacts with CAMK2N2. Interacts with SYNGAP1. Interacts with SYNPO2. Interacts with SHANK3. Interacts with GRIN2B. Interacts with CACNB2. Interacts with LRRC7. Interacts with GRM5. Interacts with DAGLA (via C-terminal); this interaction is enhanced by autophosphorylation of CAMK2A at Thr-286. Interacts with CAMK2N1; this interaction requires CAMK2A activation by Ca(2+). Requires Mg(2+) as cofactor. Autophosphorylation of Thr-286 following activation by Ca(2+)/calmodulin. Phosphorylation of Thr-286 locks the kinase into an activated state. Post-translationally, palmitoylated. Probably palmitoylated by ZDHHC3 and ZDHHC7. As to expression, expressed in brain. In terms of tissue distribution, expressed in skeletal muscle.

It is found in the cytoplasm. The protein resides in the synapse. Its subcellular location is the postsynaptic density. It localises to the cell projection. The protein localises to the dendritic spine. It is found in the dendrite. It carries out the reaction L-seryl-[protein] + ATP = O-phospho-L-seryl-[protein] + ADP + H(+). The catalysed reaction is L-threonyl-[protein] + ATP = O-phospho-L-threonyl-[protein] + ADP + H(+). Activated by Ca(2+)/calmodulin. Binding of calmodulin results in conformational change that relieves intrasteric autoinhibition and allows autophosphorylation of Thr-286 which turns the kinase in a constitutively active form and confers to the kinase a Ca(2+)-independent activity. In terms of biological role, calcium/calmodulin-dependent protein kinase that functions autonomously after Ca(2+)/calmodulin-binding and autophosphorylation, and is involved in various processes, such as synaptic plasticity, neurotransmitter release and long-term potentiation. Member of the NMDAR signaling complex in excitatory synapses, it regulates NMDAR-dependent potentiation of the AMPAR and therefore excitatory synaptic transmission. Regulates dendritic spine development. Also regulates the migration of developing neurons. Phosphorylates the transcription factor FOXO3 to activate its transcriptional activity. Phosphorylates the transcription factor ETS1 in response to calcium signaling, thereby decreasing ETS1 affinity for DNA. In response to interferon-gamma (IFN-gamma) stimulation, catalyzes phosphorylation of STAT1, stimulating the JAK-STAT signaling pathway. In response to interferon-beta (IFN-beta) stimulation, stimulates the JAK-STAT signaling pathway. Acts as a negative regulator of 2-arachidonoylglycerol (2-AG)-mediated synaptic signaling via modulation of DAGLA activity. Has no kinase activity. The sequence is that of Calcium/calmodulin-dependent protein kinase type II subunit alpha (Camk2a) from Mus musculus (Mouse).